The sequence spans 76 residues: Omega-conotoxin-like TxO5 (76 aa).

Residues 1-22 form the signal peptide; the sequence is MKLTCMVIVAVLFLTAWTFVTA. The propeptide occupies 23 to 50; it reads ITSNGLENLFPNAHHEMKNPEASKLNKR. Intrachain disulfides connect cysteine 51–cysteine 66, cysteine 58–cysteine 70, and cysteine 65–cysteine 75.

Belongs to the conotoxin O1 superfamily. As to expression, expressed by the venom duct.

It is found in the secreted. Omega-conotoxins act at presynaptic membranes, they bind and block voltage-gated calcium channels (Cav). The sequence is that of Omega-conotoxin-like TxO5 (TXO5) from Conus textile (Cloth-of-gold cone).